The primary structure comprises 194 residues: Large ribosomal subunit protein uL10 (194 aa).

Over residues 172–187 (EGGAAEAPAEAATEAP) the composition is skewed to low complexity. A disordered region spans residues 172–194 (EGGAAEAPAEAATEAPAEAEAES).

This sequence belongs to the universal ribosomal protein uL10 family. As to quaternary structure, part of the ribosomal stalk of the 50S ribosomal subunit. The N-terminus interacts with L11 and the large rRNA to form the base of the stalk. The C-terminus forms an elongated spine to which L12 dimers bind in a sequential fashion forming a multimeric L10(L12)X complex.

Functionally, forms part of the ribosomal stalk, playing a central role in the interaction of the ribosome with GTP-bound translation factors. This chain is Large ribosomal subunit protein uL10, found in Rhodococcus erythropolis (strain PR4 / NBRC 100887).